Reading from the N-terminus, the 360-residue chain is Archaemetzincin-2 (360 aa).

H254 provides a ligand contact to Zn(2+). E255 acts as the Proton acceptor in catalysis. Zn(2+)-binding residues include H258, H264, C265, C270, C289, and C292.

It belongs to the peptidase M54 family. Zn(2+) is required as a cofactor.

In terms of biological role, probable zinc metalloprotease. This chain is Archaemetzincin-2 (AMZ2), found in Macaca fascicularis (Crab-eating macaque).